The primary structure comprises 105 residues: Large ribosomal subunit protein eL36 (105 aa).

The tract at residues 86-105 (QAGKKKRDDIANINRKASAK) is disordered.

This sequence belongs to the eukaryotic ribosomal protein eL36 family.

In Dictyostelium discoideum (Social amoeba), this protein is Large ribosomal subunit protein eL36 (rpl36).